Consider the following 88-residue polypeptide: ATP synthase subunit c 2 (88 aa).

2 helical membrane-spanning segments follow: residues 4 to 24 (FSWV…GTGI) and 53 to 73 (IGLA…MIIL).

It belongs to the ATPase C chain family. In terms of assembly, F-type ATPases have 2 components, F(1) - the catalytic core - and F(0) - the membrane proton channel. F(1) has five subunits: alpha(3), beta(3), gamma(1), delta(1), epsilon(1). F(0) has three main subunits: a(1), b(2) and c(10-14). The alpha and beta chains form an alternating ring which encloses part of the gamma chain. F(1) is attached to F(0) by a central stalk formed by the gamma and epsilon chains, while a peripheral stalk is formed by the delta and b chains.

It is found in the cell inner membrane. In terms of biological role, f(1)F(0) ATP synthase produces ATP from ADP in the presence of a proton or sodium gradient. F-type ATPases consist of two structural domains, F(1) containing the extramembraneous catalytic core and F(0) containing the membrane proton channel, linked together by a central stalk and a peripheral stalk. During catalysis, ATP synthesis in the catalytic domain of F(1) is coupled via a rotary mechanism of the central stalk subunits to proton translocation. Functionally, key component of the F(0) channel; it plays a direct role in translocation across the membrane. A homomeric c-ring of between 10-14 subunits forms the central stalk rotor element with the F(1) delta and epsilon subunits. This chain is ATP synthase subunit c 2, found in Syntrophotalea carbinolica (strain DSM 2380 / NBRC 103641 / GraBd1) (Pelobacter carbinolicus).